Here is a 699-residue protein sequence, read N- to C-terminus: Kinesin-like protein KIF3A (699 aa).

The 332-residue stretch at 14-345 (NVKVVVRCRP…LRYANRAKNI (332 aa)) folds into the Kinesin motor domain. Residue 100 to 107 (GQTGTGKT) coordinates ATP. Positions 355-590 (PKDALLRQFQ…LSRELRLQML (236 aa)) form a coiled coil. Disordered stretches follow at residues 372-421 (KKLE…KMIE) and 663-699 (SLMKLERPRTSKGKARPKTGRRKRSAKPETVIDSLLQ). Over residues 376-400 (EGEEISGSDISGSEEDDDEEGEVGE) the composition is skewed to acidic residues. A compositionally biased stretch (basic residues) spans 672 to 687 (TSKGKARPKTGRRKRS). Residue serine 687 is modified to Phosphoserine. A globular region spans residues 697–699 (LLQ).

This sequence belongs to the TRAFAC class myosin-kinesin ATPase superfamily. Kinesin family. Kinesin II subfamily. As to quaternary structure, heterodimer of KIF3A and KIF3B. Interacts with CIMAP3. Interacts with CLN3. Interacts with DCTN1. Interacts with FLCN. Interacts with AP3B1.

It localises to the cytoplasm. Its subcellular location is the cytoskeleton. The protein resides in the cell projection. The protein localises to the cilium. It is found in the microtubule organizing center. It localises to the centrosome. Its subcellular location is the centriole. In terms of biological role, microtubule-based anterograde translocator for membranous organelles. Plus end-directed microtubule sliding activity in vitro. Plays a role in primary cilia formation. Plays a role in centriole cohesion and subdistal appendage organization and function. Regulates the formation of the subdistal appendage via recruitment of DCTN1 to the centriole. Also required for ciliary basal feet formation and microtubule anchoring to mother centriole. This is Kinesin-like protein KIF3A (KIF3A) from Homo sapiens (Human).